The primary structure comprises 583 residues: Probable phosphoglucomutase, cytoplasmic 1 (583 aa).

Alpha-D-glucose 1,6-bisphosphate contacts are provided by arginine 24 and serine 123. Catalysis depends on serine 123, which acts as the Phosphoserine intermediate. Serine 123, aspartate 299, aspartate 301, and aspartate 303 together coordinate Mg(2+). Serine 123 is subject to Phosphoserine. Aspartate 303, arginine 304, threonine 367, glutamate 386, serine 388, and lysine 399 together coordinate alpha-D-glucose 1,6-bisphosphate.

This sequence belongs to the phosphohexose mutase family. As to quaternary structure, monomer. It depends on Mg(2+) as a cofactor.

The protein resides in the cytoplasm. It catalyses the reaction alpha-D-glucose 1-phosphate = alpha-D-glucose 6-phosphate. It carries out the reaction O-phospho-L-seryl-[protein] + alpha-D-glucose 1-phosphate = alpha-D-glucose 1,6-bisphosphate + L-seryl-[protein]. The catalysed reaction is alpha-D-glucose 1,6-bisphosphate + L-seryl-[protein] = O-phospho-L-seryl-[protein] + alpha-D-glucose 6-phosphate. Catalyzes the reversible isomerization of alpha-D-glucose 1-phosphate to alpha-D-glucose 6-phosphate. The mechanism proceeds via the intermediate compound alpha-D-glucose 1,6-bisphosphate. This enzyme participates in both the breakdown and synthesis of glucose. This chain is Probable phosphoglucomutase, cytoplasmic 1, found in Arabidopsis thaliana (Mouse-ear cress).